A 967-amino-acid chain; its full sequence is MFNRFNKLQAALALVLYSQSALGQYYTNSSSIASNSSTAVSSTSSGSVSISSSIELTSSTSDVSSSLTELTSSSTEVSSSIAPSTSSSEVSSSITSSGSSVSGSSSITSSGSSVSSSSSATESGSSASGSSSATESGSSVSGSSTSITSGSSSATESGSSVSGSTSATESGSSASGSSSATESGSSASGSSSATESGSSVSGSSSATESGSSVSGSSSATESGSASSVPSSSGSVTESGSSSSASESSITQSGTASGSSASSTSGSVTQSGSSVSGSSASSAPGISSSIPQSTSSASTASGSITSGTLSSITSSASSATATASNSLSSSDGTIYLPSTTISGDITLTGSVIATEAVEVAAGGKLTLLDGDKYVFSADFIIHGGVFVEKSKPTYPGTEFDISGENFDVSGTFNAEEPAASSASAYSFTPGSFDNSGDISLSLSESTKGEVTFSPYSNSGAFSFSNAILNGGSVSGLQRRAESGSVNNGEINLENGSTYVVVEPVSGSGTINIISGNLYLHYPDTFTGQTVVFKGEGVLAVDPTETNTTPIPVVGYTGENQIAITADVTALSYDSATGVLTATQGNSQFSFSIGTGFSSSGFNVSEGTFAGAYAYYLNYGGVVASSATPSSTSTTSGATNSTSGSTSFGASVTGSTASTSFGASVTGSTASTLISGSPSVYTTTLTYATTTSTVVVSCSETTDSNGNVYTITTTVPCSSTTATITSCDETGCHVTTSTGTVATETVSSKSYTTVTVTHCDNNGCNTKTVTSECPEETSATTTSPKSYTTVTVTHCDDNGCNTKTVTSEAPEATTTTVSPKTYTTATVTQCDDNGCSTKTVTSEAPKETSETSETSAAPKTYTTATVTQCDDNGCNVKIITSQIPEATSTVTATSASPKSYTTVTSEGSKATSLTTAISKASSAISTYSKSAAPIKTSTGIIVQSEGIAAGLNANTLNALVGIFVLAFFN.

The signal sequence occupies residues 1-23 (MFNRFNKLQAALALVLYSQSALG). N-linked (GlcNAc...) asparagine glycans are attached at residues Asn-28 and Asn-35. The interval 72–301 (SSSTEVSSSI…STSSASTASG (230 aa)) is disordered. 9 consecutive repeat copies span residues 93-105 (SITS…SGSS), 106-118 (SITS…SSSS), 119-131 (SATE…SGSS), 132-144 (SATE…SGSS), 153-165 (SATE…SGST), 166-178 (SATE…SGSS), 179-191 (SATE…SGSS), 192-204 (SATE…SGSS), and 205-217 (SATE…SGSS). A 13 X approximate repeats, Ser-rich region spans residues 93-278 (SITSSGSSVS…QSGSSVSGSS (186 aa)). A 1-10; approximate repeat occupies 218–230 (SATESGSASSVPS). Residues 234–247 (SVTESGSSSSASES) form a 1-11; approximate repeat. One copy of the 1-12; approximate repeat lies at 248-259 (SITQSGTASGSS). One copy of the 1-13 repeat lies at 266–278 (SVTQSGSSVSGSS). N-linked (GlcNAc...) asparagine glycosylation is found at Asn-493, Asn-601, and Asn-638. 4 repeat units span residues 745-780 (SSKS…ATTT), 781-815 (SPKS…TTTV), 816-854 (SPKT…ETSA), and 855-893 (APKT…ATSA). A 4.5 X approximate tandem repeats, Thr-rich region spans residues 745–902 (SSKSYTTVTV…ASPKSYTTVT (158 aa)). A disordered region spans residues 836–857 (KTVTSEAPKETSETSETSAAPK). One copy of the 2-5; truncated repeat lies at 894–902 (SPKSYTTVT). Residue Ala-946 is the site of GPI-anchor amidated alanine attachment. A propeptide spans 947 to 967 (AGLNANTLNALVGIFVLAFFN) (removed in mature form).

This sequence belongs to the SRP1/TIP1 family. The GPI-anchor is attached to the protein in the endoplasmic reticulum and serves to target the protein to the cell surface. There, the glucosamine-inositol phospholipid moiety is cleaved off and the GPI-modified mannoprotein is covalently attached via its lipidless GPI glycan remnant to the 1,6-beta-glucan of the outer cell wall layer.

The protein resides in the secreted. The protein localises to the cell wall. It localises to the membrane. Functionally, involved in cell wall organization and biosynthesis. This Saccharomyces cerevisiae (strain ATCC 204508 / S288c) (Baker's yeast) protein is Haze protective factor 1 (HPF1).